The sequence spans 72 residues: Translation initiation factor IF-1 (72 aa).

Residues 1–72 (MARDDVIEVD…DRGRITFRYK (72 aa)) enclose the S1-like domain.

It belongs to the IF-1 family. In terms of assembly, component of the 30S ribosomal translation pre-initiation complex which assembles on the 30S ribosome in the order IF-2 and IF-3, IF-1 and N-formylmethionyl-tRNA(fMet); mRNA recruitment can occur at any time during PIC assembly.

The protein resides in the cytoplasm. Functionally, one of the essential components for the initiation of protein synthesis. Stabilizes the binding of IF-2 and IF-3 on the 30S subunit to which N-formylmethionyl-tRNA(fMet) subsequently binds. Helps modulate mRNA selection, yielding the 30S pre-initiation complex (PIC). Upon addition of the 50S ribosomal subunit IF-1, IF-2 and IF-3 are released leaving the mature 70S translation initiation complex. This chain is Translation initiation factor IF-1, found in Helicobacter acinonychis (strain Sheeba).